Reading from the N-terminus, the 125-residue chain is Multifunctional methyltransferase subunit TRM112-like protein (125 aa).

In terms of domain architecture, TRM112 spans 2–121 (KLFVHNFMSS…RDGIPNMLKV (120 aa)).

The protein belongs to the TRM112 family.

The protein resides in the nucleus. Its subcellular location is the nucleoplasm. The protein localises to the cytoplasm. It localises to the perinuclear region. Its function is as follows. Acts as an activator of both RNA and protein methyltransferases. The polypeptide is Multifunctional methyltransferase subunit TRM112-like protein (Caenorhabditis elegans).